The chain runs to 187 residues: Choriogonadotropin subunit beta variant 1 (187 aa).

The signal sequence occupies residues Met1–Ala50. 6 disulfide bridges follow: Cys59/Cys107, Cys73/Cys122, Cys76/Cys160, Cys84/Cys138, Cys88/Cys140, and Cys143/Cys150. N-linked (GlcNAc...) asparagine glycans are attached at residues Asn63 and Asn80. A disordered region spans residues Asp161–Pro187. The segment covering Ala173–Pro187 has biased composition (pro residues).

It belongs to the glycoprotein hormones subunit beta family. As to expression, expressed in placenta, testis and pituitary.

It localises to the secreted. This Homo sapiens (Human) protein is Choriogonadotropin subunit beta variant 1 (CGB1).